The chain runs to 360 residues: Casein kinase II subunit alpha (360 aa).

The 286-residue stretch at 38 to 323 (YQLVRKLGRG…AQEAMGHEYF (286 aa)) folds into the Protein kinase domain. Residues 44–52 (LGRGKYSEV) and Lys67 contribute to the ATP site. Catalysis depends on Asp155, which acts as the Proton acceptor. Residues 334-360 (NGTEQADGQGASNSASSQSSDAKIDGA) are disordered. The span at 338-354 (QADGQGASNSASSQSSD) shows a compositional bias: low complexity.

It belongs to the protein kinase superfamily. Ser/Thr protein kinase family. CK2 subfamily. In terms of assembly, tetramer of two alpha and two beta chains. In terms of tissue distribution, expressed in a subset of the adult male sensory neurons: CEM head neurons, ray RnB neurons, and hook HOB tail neurons.

It localises to the cell projection. Its subcellular location is the axon. It is found in the cilium. The protein resides in the dendrite. The protein localises to the perikaryon. The catalysed reaction is L-seryl-[protein] + ATP = O-phospho-L-seryl-[protein] + ADP + H(+). The enzyme catalyses L-threonyl-[protein] + ATP = O-phospho-L-threonyl-[protein] + ADP + H(+). Its function is as follows. Casein kinases are operationally defined by their preferential utilization of acidic proteins such as caseins as substrates. The alpha chain contains the catalytic site. May participate in Wnt signaling. Modulates two aspects of male mating behavior; response to hermaphrodite contact and vulval location, acting in the same pathway as lov-1 and pkd-2. The chain is Casein kinase II subunit alpha (kin-3) from Caenorhabditis elegans.